The primary structure comprises 580 residues: Xylulose kinase (580 aa).

Substrate contacts are provided by His-99, Arg-170, Asp-280, and Asn-281. ATP-binding positions include Trp-355, 441–442 (GA), and Asn-445.

This sequence belongs to the FGGY kinase family. As to quaternary structure, monomer.

It carries out the reaction D-xylulose + ATP = D-xylulose 5-phosphate + ADP + H(+). In terms of biological role, phosphorylates D-xylulose to produce D-xylulose 5-phosphate, a molecule that may play an important role in the regulation of glucose metabolism and lipogenesis. This chain is Xylulose kinase (XYLB), found in Pongo abelii (Sumatran orangutan).